Here is a 334-residue protein sequence, read N- to C-terminus: Dipeptide transport ATP-binding protein DppF (334 aa).

In terms of domain architecture, ABC transporter spans 13-262 (LQAIDLKKHY…PRHPYTQALL (250 aa)). 55–62 (GESGCGKS) is a binding site for ATP.

Belongs to the ABC transporter superfamily. As to quaternary structure, the complex is composed of two ATP-binding proteins (DppD and DppF), two transmembrane proteins (DppB and DppC) and a solute-binding protein (DppA). MppA can replace DppA as binding protein for heme and ALA transport.

The protein localises to the cell inner membrane. It carries out the reaction a dipeptide(out) + ATP + H2O = a dipeptide(in) + ADP + phosphate + H(+). Part of the ABC transporter DppABCDF involved in dipeptide transport. Responsible for energy coupling to the transport system. Functionally, when a foreign outer membrane heme receptor is expressed in E.coli, DppABCDF can also transport heme and its precursor, 5-aminolevulinic acid (ALA), from the periplasm into the cytoplasm. This chain is Dipeptide transport ATP-binding protein DppF (dppF), found in Escherichia coli (strain K12).